The primary structure comprises 134 residues: Large ribosomal subunit protein eL32 (134 aa).

Belongs to the eukaryotic ribosomal protein eL32 family.

This Drosophila acanthoptera (Fruit fly) protein is Large ribosomal subunit protein eL32 (RpL32).